A 362-amino-acid chain; its full sequence is 2-oxoglutarate-dependent dioxygenase lolO1 (362 aa).

The region spanning 199 to 312 is the Fe2OG dioxygenase domain; it reads TWNYFLGQPV…RYSLVFFGHL (114 aa). Positions 222, 224, and 280 each coordinate Fe cation. Arg303 lines the 2-oxoglutarate pocket.

Belongs to the iron/ascorbate-dependent oxidoreductase family. Requires Fe(2+) as cofactor.

It participates in alkaloid biosynthesis. Functionally, 2-oxoglutarate-dependent dioxygenase; part of the gene cluster that mediates the biosynthesis of loline alkaloids, potent insecticidal agents composed of a pyrrolizidine ring system and an uncommon ether bridge linking carbons 2 and 7. Lolines are structurally differentiated by the various modifications of the L-amino group and include norloline, loline, N-methylloline, N-acetylloline, N-acetylnorloline, and N-formylloline. The first committed step is the condensation of O-acetyl-L-homoserine (derived from L-aspartic acid) and L-proline, probably catalyzed by the gamma-type pyridoxal 5'-phosphate(PLP)-dependent enzyme lolC, to give the diamino diacid, NACPP. Ensuing cyclization, decarboxylation, and acetylation steps yield 1-exo-acetamidopyrrolizidine (AcAP). LolO is required for installation of the ether bridge upon the pathway intermediate, 1-exo-acetamidopyrrolizidine (AcAP). In sequential 2-oxoglutarate- and O(2)-consuming steps, lolO removes hydrogens from C2 and C7 of AcAP to form both carbon-oxygen bonds in N-acetylnorloline (NANL), the precursor to all other lolines. The enzymes lolD, lolE, lolF and lolT have also been proposed to be involved in the ether-bridge installation. Further processing of the exocyclic moiety of NANL by fungal N-acetamidase (LolN), methyltransferase (LolM), and cytochrome P450 (LolP) enzymes, with occasional involvement of a plant acetyltransferase, generates the other known lolines. LolN transforms NANL to norlonine which is monomethylated and dimethylated to respectively lonine and N-methyllonine (NML) by lolM. LolP catalyzes hydroxylation of the methyl group in N-methylloline (NML) and further oxygenation to N-formylloline (NFL). A plant acetyltransferase is responsible for the acetylation of loline to form N-acetylloline (NAL). LolA might interact with aspartate kinase to prevent feedback inhibition of its activity by these end products and thereby promote production of l-homoserine from l-aspartate. The polypeptide is 2-oxoglutarate-dependent dioxygenase lolO1 (Epichloe uncinata (Endophyte fungus)).